We begin with the raw amino-acid sequence, 776 residues long: Probable exo-1,4-beta-xylosidase bxlB (776 aa).

Positions 1–23 (MVHLSPLLRPLAAFSFFTSLAST) are cleaved as a signal peptide. Residues Asn-65 and Asn-105 are each glycosylated (N-linked (GlcNAc...) asparagine). Asp-291 is an active-site residue. 6 N-linked (GlcNAc...) asparagine glycosylation sites follow: Asn-343, Asn-410, Asn-421, Asn-462, Asn-623, and Asn-766.

It belongs to the glycosyl hydrolase 3 family.

The protein localises to the secreted. It catalyses the reaction Hydrolysis of (1-&gt;4)-beta-D-xylans, to remove successive D-xylose residues from the non-reducing termini.. It participates in glycan degradation; xylan degradation. Xylan 1,4-beta-xylosidase involved in the hydrolysis of xylan, a major structural heterogeneous polysaccharide found in plant biomass representing the second most abundant polysaccharide in the biosphere, after cellulose. This is Probable exo-1,4-beta-xylosidase bxlB (bxlB) from Aspergillus flavus (strain ATCC 200026 / FGSC A1120 / IAM 13836 / NRRL 3357 / JCM 12722 / SRRC 167).